A 326-amino-acid polypeptide reads, in one-letter code: tRNA U34 carboxymethyltransferase (326 aa).

Residues Lys-95, Trp-109, Lys-114, Gly-134, 184–185 (VE), Tyr-204, and Arg-319 each bind carboxy-S-adenosyl-L-methionine.

This sequence belongs to the class I-like SAM-binding methyltransferase superfamily. CmoB family.

The catalysed reaction is carboxy-S-adenosyl-L-methionine + 5-hydroxyuridine(34) in tRNA = 5-carboxymethoxyuridine(34) in tRNA + S-adenosyl-L-homocysteine + H(+). Its function is as follows. Catalyzes carboxymethyl transfer from carboxy-S-adenosyl-L-methionine (Cx-SAM) to 5-hydroxyuridine (ho5U) to form 5-carboxymethoxyuridine (cmo5U) at position 34 in tRNAs. The sequence is that of tRNA U34 carboxymethyltransferase from Trichodesmium erythraeum (strain IMS101).